The following is a 271-amino-acid chain: Cell division protein FtsQ (271 aa).

Positions 1–37 (MAAGPTTAEKSGASGAKRSSKGSSDGPSRPGTRNRKF) are disordered. Residues 1 to 43 (MAAGPTTAEKSGASGAKRSSKGSSDGPSRPGTRNRKFRMPGTR) are Cytoplasmic-facing. Low complexity predominate over residues 8–24 (AEKSGASGAKRSSKGSS). The chain crosses the membrane as a helical span at residues 44–64 (ALLITLGVLLLVAGGLWALYG). Topologically, residues 65–271 (STWFRVERVK…APTAPASSGS (207 aa)) are extracellular. Residues 68 to 137 (FRVERVKTSG…HGIGLKVTER (70 aa)) enclose the POTRA domain.

This sequence belongs to the FtsQ/DivIB family. FtsQ subfamily.

It is found in the cell membrane. Functionally, essential cell division protein. The chain is Cell division protein FtsQ from Streptomyces venezuelae (strain ATCC 10712 / CBS 650.69 / DSM 40230 / JCM 4526 / NBRC 13096 / PD 04745).